The chain runs to 338 residues: Heme-dependent oxidative N-demethylase alpha subunit (338 aa).

Positions 38 and 194 each coordinate heme b. The active-site Proton donor is the Arg224. A heme b-binding site is contributed by Asn226. Glu266 contacts dimethylamine. Tyr317 and Lys318 together coordinate heme b.

As to quaternary structure, the heme-dependent oxidative N-demethylase (HODM) is a heterotetramer composed of a catalytic alpha subunit, a FMN/2Fe-2S-dependent oxidoreductase beta subunit, a gamma subunit with putative aminotransferase activity, and a delta subunit of unknown function.

The enzyme catalyses dimethylamine + NADPH + O2 + H(+) = methylamine + formaldehyde + NADP(+) + H2O. Its function is as follows. Component of the heme-dependent oxidative N-demethylase (HODM) enzyme, that catalyzes the NADPH-dependent oxidation of dimethylamine (DMA) to methylamine (MA) and formaldehyde. Functions in bacterial methylated amine catabolism, linking alkylamine oxidation to the tetrahydrofolate C1 pool. The alpha subunit of HODM binds heme, oxygen and DMA, and serves as the site of the oxidative N-demethylase activity. This chain is Heme-dependent oxidative N-demethylase alpha subunit, found in Ectopseudomonas mendocina (strain ymp) (Pseudomonas mendocina).